Here is a 534-residue protein sequence, read N- to C-terminus: Serine/threonine-protein kinase NLK (534 aa).

Sufficient for interaction with DAPK3 stretches follow at residues 8–132 (LVSC…KAHH) and 131–423 (HHHQ…SKRI). Required for interaction with TAB2 stretches follow at residues 8 to 311 (LVSC…VVTQ) and 441 to 534 (YHTC…LVWE). Disordered stretches follow at residues 29 to 79 (AAAA…SSAA) and 97 to 147 (QQPY…DIEP). The segment covering 33–61 (GHHHHHHHHLPHLPPPHLHHHHHPQHHLH) has biased composition (basic residues). The segment covering 110–126 (PGPAAAAPAQVQAAAAA) has biased composition (low complexity). Residues 129–138 (KAHHHQHSHH) show a composition bias toward basic residues. Positions 145–434 (IEPDRPIGYG…AKDALAHPYL (290 aa)) constitute a Protein kinase domain. ATP-binding positions include 151–159 (IGYGAFGVV) and Lys174. Asp271 (proton acceptor) is an active-site residue. Residue Thr305 is modified to Phosphothreonine; by autocatalysis. Residues 305 to 307 (TQE) carry the TQE motif. The required for homodimerization and kinase activation and localization to the nucleus stretch occupies residues 435 to 534 (DEGRLRYHTC…EMPPSPLVWE (100 aa)). Ser529 carries the post-translational modification Phosphoserine.

The protein belongs to the protein kinase superfamily. CMGC Ser/Thr protein kinase family. MAP kinase subfamily. As to quaternary structure, homodimer. Homodimerization is required for intermolecular autophosphorylation, kinase activation and nuclear localization. May interact with components of cullin-RING-based SCF (SKP1-CUL1-F-box protein) E3 ubiquitin-protein ligase complexes. Interacts with LEF1, MEF2A, MYBL1 and MYBL2. Interacts with the upstream activating kinases HIPK2 and MAP3K7/TAK1. Interaction with MAP3K7/TAK1 seems to be indirect, and may be mediated by other proteins such as STAT3, TAB1 and TAB2. Interacts with and phosphorylates a number of transcription factors including FOXO1, FOXO3, FOXO4, MYB, NOTCH1 and TCF7L2/TCF4. Interacts with DAPK3/ZIPK, and this interaction may disrupt interaction with transcription factors such as TCF7L2/TCF4. Forms a transcriptional repressor complex with CHD7, PPARG and SETDB1. Interacts with RNF138/NARF. Interacts with ATF5; the interaction stabilizes ATF5 at the protein level in a kinase-independent manner. Mg(2+) serves as cofactor. Post-translationally, phosphorylated on Thr-305. Intermolecular autophosphorylation on Thr-305 activates the enzyme.

Its subcellular location is the nucleus. The protein resides in the cytoplasm. The catalysed reaction is L-seryl-[protein] + ATP = O-phospho-L-seryl-[protein] + ADP + H(+). The enzyme catalyses L-threonyl-[protein] + ATP = O-phospho-L-threonyl-[protein] + ADP + H(+). Its activity is regulated as follows. Activated by the non-canonical Wnt signaling pathway, in which WNT5A leads to activation of MAP3K7/TAK1 and HIPK2, which subsequently phosphorylates and activates this protein. Activated by dimerization and subsequent intermolecular autophosphorylation on Thr-305. Other cytokines such as IL6 may also activate this regulatory circuit. Its function is as follows. Serine/threonine-protein kinase that regulates a number of transcription factors with key roles in cell fate determination. Positive effector of the non-canonical Wnt signaling pathway, acting downstream of WNT5A, MAP3K7/TAK1 and HIPK2. Negative regulator of the canonical Wnt/beta-catenin signaling pathway. Binds to and phosphorylates TCF7L2/TCF4 and LEF1, promoting the dissociation of the TCF7L2/LEF1/beta-catenin complex from DNA, as well as the ubiquitination and subsequent proteolysis of LEF1. Together these effects inhibit the transcriptional activation of canonical Wnt/beta-catenin target genes. Negative regulator of the Notch signaling pathway. Binds to and phosphorylates NOTCH1, thereby preventing the formation of a transcriptionally active ternary complex of NOTCH1, RBPJ/RBPSUH and MAML1. Negative regulator of the MYB family of transcription factors. Phosphorylation of MYB leads to its subsequent proteolysis while phosphorylation of MYBL1 and MYBL2 inhibits their interaction with the coactivator CREBBP. Other transcription factors may also be inhibited by direct phosphorylation of CREBBP itself. Acts downstream of IL6 and MAP3K7/TAK1 to phosphorylate STAT3, which is in turn required for activation of NLK by MAP3K7/TAK1. Upon IL1B stimulus, cooperates with ATF5 to activate the transactivation activity of C/EBP subfamily members. Phosphorylates ATF5 but also stabilizes ATF5 protein levels in a kinase-independent manner. Acts as an inhibitor of the mTORC1 complex in response to osmotic stress by mediating phosphorylation of RPTOR, thereby preventing recruitment of the mTORC1 complex to lysosomes. The polypeptide is Serine/threonine-protein kinase NLK (NLK) (Bos taurus (Bovine)).